The following is a 937-amino-acid chain: Beta-mannosidase A (937 aa).

Residues 1–23 (MRALPTTATTLLGVLFFPSASRS) form the signal peptide. Residues Asn-42, Asn-82, Asn-250, Asn-285, Asn-319, Asn-329, and Asn-350 are each glycosylated (N-linked (GlcNAc...) asparagine). Glu-482 serves as the catalytic Proton donor. N-linked (GlcNAc...) asparagine glycosylation is found at Asn-553, Asn-612, Asn-743, and Asn-796.

This sequence belongs to the glycosyl hydrolase 2 family. Beta-mannosidase A subfamily. As to quaternary structure, homodimer. In terms of processing, N-glycosylated.

The protein localises to the secreted. The catalysed reaction is Hydrolysis of terminal, non-reducing beta-D-mannose residues in beta-D-mannosides.. The protein operates within glycan metabolism; N-glycan degradation. Exoglycosidase that cleaves the single beta-linked mannose residue from the non-reducing end of beta-mannosidic oligosaccharides of various complexity and length. Involved in the degradation of polymeric mannan and galactomannan. Releases the terminal mannose residue from mannotriose and is somewaht less active on other mannooligosaccharides. The sequence is that of Beta-mannosidase A (mndA) from Aspergillus aculeatus.